Consider the following 370-residue polypeptide: Vasopressin V2 receptor (370 aa).

Positions 1–21 (MFMASTTSAVPWHLSQPTPAG) are enriched in polar residues. Residues 1–26 (MFMASTTSAVPWHLSQPTPAGNGSEG) form a disordered region. At 1-38 (MFMASTTSAVPWHLSQPTPAGNGSEGELLTARDPLLAQ) the chain is on the extracellular side. Asn-22 carries N-linked (GlcNAc...) asparagine glycosylation. A helical transmembrane segment spans residues 39–63 (AELALLSTVFVAVALSNGLVLGALV). Over 64–77 (RRGRRGRWAPMHVF) the chain is Cytoplasmic. Residues 78 to 98 (IGHLCLADLAVALFQVLPQLA) traverse the membrane as a helical segment. Residues 99–113 (WDATDRFRGPDALCR) lie on the Extracellular side of the membrane. Residues 114 to 135 (AVKYLQMVGMYASSYMILAMTL) traverse the membrane as a helical segment. At 136–159 (DRHRAICRPMLAHRHGGGTHWNRP) the chain is on the cytoplasmic side. The chain crosses the membrane as a helical span at residues 160 to 180 (VLLAWAFSLLFSLPQLFIFAQ). At 181–199 (RDVDGSGVLDCWARFAEPW) the chain is on the extracellular side. Residues 200 to 219 (GLRAYVTWIALMVFVAPALG) form a helical membrane-spanning segment. At 220 to 270 (IAACQVLIFREIHASLGPGPVPRAGGPRRGCRPGSPAEGARVSAAVAKTVK) the chain is on the cytoplasmic side. Residues 271–292 (MTLVIVIVYVLCWAPFFLVQLW) form a helical membrane-spanning segment. Topologically, residues 293–307 (AAWDPEAPREGPPFV) are extracellular. The chain crosses the membrane as a helical span at residues 308 to 327 (LLMLLASLNSCTNPWIYASF). The Cytoplasmic segment spans residues 328–370 (SSSISSELRSLLCCTWRRAPPSPGPQEESCATASSFLAKDTPS). Residues Cys-340 and Cys-341 are each lipidated (S-palmitoyl cysteine). The segment at 347–370 (PPSPGPQEESCATASSFLAKDTPS) is disordered.

Belongs to the G-protein coupled receptor 1 family. Vasopressin/oxytocin receptor subfamily. Interacts with ARRDC4. Identified in a complex containing at least ARRDC4, V2R and HGS. Interacts with TMEM147.

It is found in the cell membrane. Receptor for arginine vasopressin. The activity of this receptor is mediated by G proteins which activate adenylate cyclase. Involved in renal water reabsorption. This Bos taurus (Bovine) protein is Vasopressin V2 receptor (AVPR2).